The sequence spans 696 residues: Polyribonucleotide nucleotidyltransferase (696 aa).

Mg(2+) is bound by residues D489 and D495. The 60-residue stretch at 556 to 615 (PQYVTMKINPEKIRDVIGKGGVVIREITEATNCAIDISDDGTIKIAAHTTEEGEAAKRRI) folds into the KH domain. Residues 625 to 693 (GKVYEGTVVK…RQGRVRLSMK (69 aa)) enclose the S1 motif domain.

Belongs to the polyribonucleotide nucleotidyltransferase family. As to quaternary structure, component of the RNA degradosome, which is a multiprotein complex involved in RNA processing and mRNA degradation. Mg(2+) serves as cofactor.

The protein localises to the cytoplasm. The catalysed reaction is RNA(n+1) + phosphate = RNA(n) + a ribonucleoside 5'-diphosphate. Functionally, involved in mRNA degradation. Catalyzes the phosphorolysis of single-stranded polyribonucleotides processively in the 3'- to 5'-direction. The protein is Polyribonucleotide nucleotidyltransferase of Coxiella burnetii (strain RSA 331 / Henzerling II).